Here is a 433-residue protein sequence, read N- to C-terminus: 3-phosphoshikimate 1-carboxyvinyltransferase (433 aa).

3-phosphoshikimate contacts are provided by lysine 15, serine 16, and arginine 20. Residue lysine 15 participates in phosphoenolpyruvate binding. Phosphoenolpyruvate is bound by residues glycine 96 and arginine 124. Positions 169, 171, 195, 318, and 345 each coordinate 3-phosphoshikimate. Phosphoenolpyruvate is bound at residue glutamine 171. Aspartate 318 acts as the Proton acceptor in catalysis. Residues arginine 349 and arginine 393 each coordinate phosphoenolpyruvate.

The protein belongs to the EPSP synthase family. As to quaternary structure, monomer.

It localises to the cytoplasm. It carries out the reaction 3-phosphoshikimate + phosphoenolpyruvate = 5-O-(1-carboxyvinyl)-3-phosphoshikimate + phosphate. Its pathway is metabolic intermediate biosynthesis; chorismate biosynthesis; chorismate from D-erythrose 4-phosphate and phosphoenolpyruvate: step 6/7. Catalyzes the transfer of the enolpyruvyl moiety of phosphoenolpyruvate (PEP) to the 5-hydroxyl of shikimate-3-phosphate (S3P) to produce enolpyruvyl shikimate-3-phosphate and inorganic phosphate. The chain is 3-phosphoshikimate 1-carboxyvinyltransferase from Pelodictyon phaeoclathratiforme (strain DSM 5477 / BU-1).